A 266-amino-acid polypeptide reads, in one-letter code: uncharacterized protein (266 aa).

8 consecutive transmembrane segments (helical) span residues 9-29 (IAAL…LFIF), 37-57 (TMPH…LVFY), 69-89 (LIKV…ISLL), 123-143 (FLLM…MIFT), 153-173 (YNPF…LVIA), 184-204 (LPLA…LFLL), 216-236 (SVFA…ILIL), and 246-266 (TNSL…MVFV).

It localises to the cell membrane. This is an uncharacterized protein from Haemophilus influenzae (strain ATCC 51907 / DSM 11121 / KW20 / Rd).